Consider the following 338-residue polypeptide: Large ribosomal subunit protein uL3 (338 aa).

Residues 230–253 form a disordered region; sequence HRKGHRRTGTIGPQAPALMFTQPR.

This sequence belongs to the universal ribosomal protein uL3 family. As to quaternary structure, part of the 50S ribosomal subunit. Forms a cluster with proteins L14 and L24e.

Functionally, one of the primary rRNA binding proteins, it binds directly near the 3'-end of the 23S rRNA, where it nucleates assembly of the 50S subunit. The polypeptide is Large ribosomal subunit protein uL3 (Pyrobaculum neutrophilum (strain DSM 2338 / JCM 9278 / NBRC 100436 / V24Sta) (Thermoproteus neutrophilus)).